We begin with the raw amino-acid sequence, 657 residues long: Broad substrate specificity ATP-binding cassette transporter ABCG2 (657 aa).

A disordered region spans residues 1-24 (MSSSNDHVLVPMSQRNNNGLPRTN). The Cytoplasmic segment spans residues 1–393 (MSSSNDHVLV…SFKNLLGNPQ (393 aa)). Polar residues predominate over residues 13 to 24 (SQRNNNGLPRTN). The 238-residue stretch at 48-285 (VKSGFLVRKT…FASAGYHCEP (238 aa)) folds into the ABC transporter domain. ATP is bound by residues 79–86 (GPTGGGKS), 183–189 (RGISGGE), Glu-210, and His-242. Residues 389 to 653 (LGNPQASVAQ…TIAYLKLLFL (265 aa)) enclose the ABC transmembrane type-2 domain. A helical membrane pass occupies residues 394–414 (ASVAQLIVTVILGLIIGAIYF). Residues 415-428 (DLKYDAAGMQNRAG) are Extracellular-facing. A helical transmembrane segment spans residues 429–449 (VLFFLTTNQCFSSVSAVELFV). Residues 450–477 (VEKKLFIHEYISGYYRVSSYFFGKVMSD) are Cytoplasmic-facing. The helical transmembrane segment at 478 to 498 (LLPMRFLPSVIFTCVLYFMLG) threads the bilayer. Topologically, residues 499 to 506 (LKKTVDAF) are extracellular. Residues 507–527 (FIMMFTLIMVAYTASSMALAI) traverse the membrane as a helical segment. Residues 528 to 535 (ATGQSVVS) are Cytoplasmic-facing. A helical membrane pass occupies residues 536–556 (VATLLMTIAFVFMMLFSGLLV). Residues 557 to 632 (NLRTIGPWLS…LSPWGLWKNH (76 aa)) lie on the Extracellular side of the membrane. A disulfide bridge connects residues Cys-592 and Cys-610. Asn-596 and Asn-600 each carry an N-linked (GlcNAc...) asparagine glycan. The chain crosses the membrane as a helical span at residues 633–653 (VALACMIIIFLTIAYLKLLFL). Over 654 to 657 (KKYS) the chain is Cytoplasmic.

Belongs to the ABC transporter superfamily. ABCG family. Eye pigment precursor importer (TC 3.A.1.204) subfamily. In terms of assembly, homodimer; disulfide-linked. The minimal functional unit is a homodimer, but the major oligomeric form in plasma membrane is a homotetramer with possibility of higher order oligomerization up to homododecamers. N-glycosylated. Glycosylation-deficient ABCG2 is normally expressed and functional. Post-translationally, phosphorylated. Phosphorylation may regulate the localization to the plasma membrane, the homooligomerization and therefore, the activity of the transporter. Highly expressed in kidney. Lower expression in liver, colon, heart, spleen, and placenta. Expressed in mammary gland. Expressed in intestinal villi and renal proximal tubules, hepatic bile canalicular membranes, and placental labyrinth cells (at protein level).

The protein resides in the cell membrane. It localises to the apical cell membrane. The protein localises to the mitochondrion membrane. The enzyme catalyses ATP + H2O + xenobioticSide 1 = ADP + phosphate + xenobioticSide 2.. The catalysed reaction is riboflavin(in) + ATP + H2O = riboflavin(out) + ADP + phosphate + H(+). It catalyses the reaction pheophorbide a(in) + ATP + H2O = pheophorbide a(out) + ADP + phosphate + H(+). It carries out the reaction urate(in) + ATP + H2O = urate(out) + ADP + phosphate + H(+). The enzyme catalyses indoxyl sulfate(in) + ATP + H2O = indoxyl sulfate(out) + ADP + phosphate + H(+). The catalysed reaction is sphing-4-enine 1-phosphate(in) + ATP + H2O = sphing-4-enine 1-phosphate(out) + ADP + phosphate + H(+). It catalyses the reaction estrone 3-sulfate(in) + ATP + H2O = estrone 3-sulfate(out) + ADP + phosphate + H(+). It carries out the reaction dehydroepiandrosterone 3-sulfate(in) + ATP + H2O = dehydroepiandrosterone 3-sulfate(out) + ADP + phosphate + H(+). The enzyme catalyses 4-methylumbelliferone sulfate(in) + ATP + H2O = 4-methylumbelliferone sulfate(out) + ADP + phosphate + H(+). The catalysed reaction is 5,7-dimethyl-2-methylamino-4-(3-pyridylmethyl)-1,3-benzothiazol-6-yl beta-D-glucuronate(in) + ATP + H2O = 5,7-dimethyl-2-methylamino-4-(3-pyridylmethyl)-1,3-benzothiazol-6-yl beta-D-glucuronate(out) + ADP + phosphate + H(+). It catalyses the reaction 4-methylumbelliferone beta-D-glucuronate(in) + ATP + H2O = 4-methylumbelliferone beta-D-glucuronate(out) + ADP + phosphate + H(+). It carries out the reaction 5,7-dimethyl-2-methylamino-4-(3-pyridylmethyl)-1,3-benzothiazol-6-yl sulfate(in) + ATP + H2O = 5,7-dimethyl-2-methylamino-4-(3-pyridylmethyl)-1,3-benzothiazol-6-yl sulfate(out) + ADP + phosphate + H(+). The enzyme catalyses 17beta-estradiol 17-O-(beta-D-glucuronate)(in) + ATP + H2O = 17beta-estradiol 17-O-(beta-D-glucuronate)(out) + ADP + phosphate + H(+). The catalysed reaction is methotrexate(in) + ATP + H2O = methotrexate(out) + ADP + phosphate + H(+). It catalyses the reaction itaconate(in) + ATP + H2O = itaconate(out) + ADP + phosphate + H(+). Specifically inhibited by the fungal toxin fumitremorgin C and Ko143. Broad substrate specificity ATP-dependent transporter of the ATP-binding cassette (ABC) family that actively extrudes a wide variety of physiological compounds, dietary toxins and xenobiotics from cells. Involved in porphyrin homeostasis, mediating the export of protoporphyrin IX (PPIX) from both mitochondria to cytosol and cytosol to extracellular space, it also functions in the cellular export of heme. Also mediates the efflux of sphingosine-1-P from cells. Acts as a urate exporter functioning in both renal and extrarenal urate excretion. In kidney, it also functions as a physiological exporter of the uremic toxin indoxyl sulfate. Also involved in the excretion of steroids like estrone 3-sulfate/E1S, 3beta-sulfooxy-androst-5-en-17-one/DHEAS, and other sulfate conjugates. Mediates the secretion of the riboflavin and biotin vitamins into milk. Extrudes pheophorbide a, a phototoxic porphyrin catabolite of chlorophyll, reducing its bioavailability. Plays an important role in the exclusion of xenobiotics from the brain. It confers to cells a resistance to multiple drugs and other xenobiotics including mitoxantrone, pheophorbide, camptothecin, methotrexate, azidothymidine, and the anthracyclines daunorubicin and doxorubicin, through the control of their efflux. In placenta, it limits the penetration of drugs from the maternal plasma into the fetus. May play a role in early stem cell self-renewal by blocking differentiation. In inflammatory macrophages, exports itaconate from the cytosol to the extracellular compartment and limits the activation of TFEB-dependent lysosome biogenesis involved in antibacterial innate immune response. The sequence is that of Broad substrate specificity ATP-binding cassette transporter ABCG2 (Abcg2) from Mus musculus (Mouse).